A 354-amino-acid chain; its full sequence is MGDWAQLAQSVILGLIFSYLLAKLISIVVTFKEDNLSLTRHPEESQLEIKPEGVDSRRLDSSCGGFGGEADSLVAEQGSSRSDSVAGDDSEEDDDWEGVESTELDEAFSAATLFVTTAAADRLSQKVPSDVQQQLYGLYKIATEGPCTAPQPSALKMTARAKWQAWQKLGAMPPEEAMEKYIEIVTQLYPTWLDGGVKAGSRGGDDAASNSRGTMGPVFSSLVYDEESENELKIDAIHGFAREGEVENLLKSIESGIPVNARDSEGRTPLHWAIDRGHLNIAKVLVDKNADVNAKDNEGQTPLHYAVVCDREAIAEFLVKQNANTAAKDEDGNSPLDLCESDWPWIRDSAKQAD.

A helical; Signal-anchor transmembrane segment spans residues 11 to 31 (VILGLIFSYLLAKLISIVVTF). The tract at residues 75-96 (AEQGSSRSDSVAGDDSEEDDDW) is disordered. A compositionally biased stretch (acidic residues) spans 86–96 (AGDDSEEDDDW). Residues 104–194 (LDEAFSAATL…VTQLYPTWLD (91 aa)) form the ACB domain. Residues 136-140 (YGLYK), Lys-162, and Tyr-181 contribute to the an acyl-CoA site. ANK repeat units lie at residues 265–294 (EGRT…DVNA) and 298–327 (EGQT…NTAA).

It belongs to the ACBP family. As to quaternary structure, interacts (via ankyrin repeats) with HIPP26 and the ethylene-responsive element-binding proteins RAP2-3/EBP and RAP2-12. Interacts with CSE. As to expression, mostly expressed in roots and flowers, and, to a lower extent, in stems, pods and leaves (at protein level).

Its subcellular location is the cell membrane. The protein resides in the endoplasmic reticulum membrane. It is found in the peroxisome membrane. Binds medium- and long-chain acyl-CoA esters with very high affinity. Can interact in vitro with palmitoyl-CoA, but not with oleoyl-CoA. Binds to lead ions (Pb). May function as an intracellular carrier of acyl-CoA esters. Required for proper phospholipid and, to a lower extent, galactolipid composition. In Arabidopsis thaliana (Mouse-ear cress), this protein is Acyl-CoA-binding domain-containing protein 2 (ACBP2).